A 117-amino-acid chain; its full sequence is 5-hydroxyisourate hydrolase (117 aa).

Substrate-binding residues include His-7, Arg-45, and Tyr-114.

This sequence belongs to the transthyretin family. 5-hydroxyisourate hydrolase subfamily. Homotetramer.

The enzyme catalyses 5-hydroxyisourate + H2O = 5-hydroxy-2-oxo-4-ureido-2,5-dihydro-1H-imidazole-5-carboxylate + H(+). Catalyzes the hydrolysis of 5-hydroxyisourate (HIU) to 2-oxo-4-hydroxy-4-carboxy-5-ureidoimidazoline (OHCU). The sequence is that of 5-hydroxyisourate hydrolase from Ralstonia nicotianae (strain ATCC BAA-1114 / GMI1000) (Ralstonia solanacearum).